The primary structure comprises 136 residues: Large ribosomal subunit protein uL22 (136 aa).

It belongs to the universal ribosomal protein uL22 family. In terms of assembly, part of the 50S ribosomal subunit.

In terms of biological role, this protein binds specifically to 23S rRNA; its binding is stimulated by other ribosomal proteins, e.g. L4, L17, and L20. It is important during the early stages of 50S assembly. It makes multiple contacts with different domains of the 23S rRNA in the assembled 50S subunit and ribosome. The globular domain of the protein is located near the polypeptide exit tunnel on the outside of the subunit, while an extended beta-hairpin is found that lines the wall of the exit tunnel in the center of the 70S ribosome. This is Large ribosomal subunit protein uL22 from Leifsonia xyli subsp. xyli (strain CTCB07).